A 571-amino-acid chain; its full sequence is Carboxylesterase 3 (571 aa).

An N-terminal signal peptide occupies residues 1-26 (MERAVRVESGVLVGVVCLLLACPATA). Cys-97 and Cys-124 are oxidised to a cystine. Asn-105 carries N-linked (GlcNAc...) asparagine glycosylation. Residue Ser-229 is the Acyl-ester intermediate of the active site. Cys-281 and Cys-292 are oxidised to a cystine. Catalysis depends on charge relay system residues Glu-347 and His-460. The Prevents secretion from ER motif lies at 568-571 (QEDL).

This sequence belongs to the type-B carboxylesterase/lipase family. In terms of processing, N-glycosylated. As to expression, expressed in liver, colon and small intestine.

The protein resides in the endoplasmic reticulum lumen. It carries out the reaction a carboxylic ester + H2O = an alcohol + a carboxylate + H(+). Functionally, involved in the detoxification of xenobiotics and in the activation of ester and amide prodrugs. Shows low catalytic efficiency for hydrolysis of CPT-11 (7-ethyl-10-[4-(1-piperidino)-1-piperidino]-carbonyloxycamptothecin), a prodrug for camptothecin used in cancer therapeutics. The protein is Carboxylesterase 3 (CES3) of Homo sapiens (Human).